A 419-amino-acid polypeptide reads, in one-letter code: [Butirosin acyl-carrier protein]--L-glutamate ligase (419 aa).

Positions 144–345 constitute an ATP-grasp domain; sequence RRLMERNGFN…FVESRVLVFN (202 aa). 174–231 contributes to the ATP binding site; the sequence is ISAGFSKCVLKVPYGSSGKGLKVIDNERNFRFLLNYIQNRQTNVDLLLEGWHPHRLSL. Aspartate 298, glutamate 312, and asparagine 314 together coordinate Mg(2+). Aspartate 298, glutamate 312, and asparagine 314 together coordinate Mn(2+).

As to quaternary structure, monomer. The cofactor is Mg(2+). It depends on Mn(2+) as a cofactor.

The enzyme catalyses holo-[BtrI ACP] + L-glutamate + ATP = gamma-L-glutamyl-[BtrI ACP] + ADP + phosphate. It carries out the reaction 4-aminobutanoyl-[BtrI ACP] + L-glutamate + ATP = 4-(gamma-L-glutamylamino)butanoyl-[BtrI ACP] + ADP + phosphate + H(+). It participates in antibiotic biosynthesis; butirosin biosynthesis. ATP-dependent ligase that catalyzes 2 steps in the biosynthesis of the side chain of the aminoglycoside antibiotics in the biosynthetic pathway of butirosin. Mediates the addition of one molecule of L-glutamate to a dedicated acyl-carrier protein. Following decarboxylation of the product by BtrK, adds a second L-glutamate molecule. The sequence is that of [Butirosin acyl-carrier protein]--L-glutamate ligase (btrJ) from Niallia circulans (Bacillus circulans).